Consider the following 324-residue polypeptide: NADH-ubiquinone oxidoreductase chain 1 (324 aa).

Helical transmembrane passes span 9 to 29 (ILNP…LTLL), 43 to 63 (PNIV…KLFI), 75 to 95 (ILFI…WAPL), 106 to 126 (LAIL…LGSG), 146 to 166 (ISYE…TGGF), 177 to 197 (SIWL…STLA), 228 to 250 (LFFL…LFLG), 259 to 279 (ELTT…FLWV), and 299 to 319 (FLPL…TFAG).

Belongs to the complex I subunit 1 family.

It is found in the mitochondrion inner membrane. The enzyme catalyses a ubiquinone + NADH + 5 H(+)(in) = a ubiquinol + NAD(+) + 4 H(+)(out). Functionally, core subunit of the mitochondrial membrane respiratory chain NADH dehydrogenase (Complex I) that is believed to belong to the minimal assembly required for catalysis. Complex I functions in the transfer of electrons from NADH to the respiratory chain. The immediate electron acceptor for the enzyme is believed to be ubiquinone. The chain is NADH-ubiquinone oxidoreductase chain 1 (MT-ND1) from Tetraodon nigroviridis (Spotted green pufferfish).